The chain runs to 249 residues: UPF0309 protein GTNG_1302 (249 aa).

The SIS domain occupies 31–214; the sequence is VSKAVQNGGI…ALMAENGVEP (184 aa).

The protein belongs to the UPF0309 family.

This is UPF0309 protein GTNG_1302 from Geobacillus thermodenitrificans (strain NG80-2).